A 480-amino-acid polypeptide reads, in one-letter code: Prostacyclin synthase (480 aa).

Residues M1–R21 form a helical membrane-spanning segment. Substrate is bound by residues R104, L110, N277, T338–R339, and R362. C421 lines the heme pocket.

The protein belongs to the cytochrome P450 family. Requires heme as cofactor.

Its subcellular location is the endoplasmic reticulum membrane. It carries out the reaction prostaglandin H2 = prostaglandin I2. The catalysed reaction is a hydroperoxyeicosatetraenoate = an oxoeicosatetraenoate + H2O. The enzyme catalyses (15S)-hydroperoxy-(5Z,8Z,11Z,13E)-eicosatetraenoate = 15-oxo-(5Z,8Z,11Z,13E)-eicosatetraenoate + H2O. It catalyses the reaction (15S)-hydroperoxy-(5Z,8Z,11Z,13E)-eicosatetraenoate + AH2 = (15S)-hydroxy-(5Z,8Z,11Z,13E)-eicosatetraenoate + A + H2O. Its function is as follows. Catalyzes the isomerization of prostaglandin H2 to prostacyclin (= prostaglandin I2). Catalyzes the biosynthesis and metabolism of eicosanoids. Catalyzes the isomerization of prostaglandin H2 to prostacyclin (= prostaglandin I2), a potent mediator of vasodilation and inhibitor of platelet aggregation. Additionally, displays dehydratase activity, toward hydroperoxyeicosatetraenoates (HPETEs), especially toward (15S)-hydroperoxy-(5Z,8Z,11Z,13E)-eicosatetraenoate (15(S)-HPETE). In Danio rerio (Zebrafish), this protein is Prostacyclin synthase.